The chain runs to 403 residues: Protein STRICTOSIDINE SYNTHASE-LIKE 13 (403 aa).

An N-terminal signal peptide occupies residues 1–42 (MEKKGQHGTYESMMTHHPILCIIALSVLFIAIDPFHMSPIGG). Asparagine 66 and asparagine 206 each carry an N-linked (GlcNAc...) asparagine glycan.

This sequence belongs to the strictosidine synthase family.

Its subcellular location is the vacuole. In terms of biological role, required for the exine formation during pollen development. In Arabidopsis thaliana (Mouse-ear cress), this protein is Protein STRICTOSIDINE SYNTHASE-LIKE 13.